Consider the following 639-residue polypeptide: Poly(A)-specific ribonuclease PARN (639 aa).

A divalent metal cation contacts are provided by Asp-28 and Glu-30. Ser-163 and Ser-167 each carry phosphoserine. The R3H domain maps to 178–245; the sequence is KKFIDQVVEK…ERYIVISKVD (68 aa). Lys-220 is modified (N6-acetyllysine). Positions 292 and 382 each coordinate a divalent metal cation. Residue Lys-499 is modified to N6-acetyllysine. The residue at position 530 (Ser-530) is a Phosphoserine. The residue at position 557 (Ser-557) is a Phosphoserine; by MAPKAPK2. The interval 560-639 is disordered; the sequence is APSTVGKRNL…ATLFEVPDTW (80 aa). Phosphoserine is present on residues Ser-583 and Ser-587. Residues 606–615 show a composition bias toward basic residues; it reads KKAKKLKRMK. Phosphoserine is present on residues Ser-619, Ser-623, and Ser-628. Thr-631 bears the Phosphothreonine mark.

It belongs to the CAF1 family. As to quaternary structure, homodimer. Found in a mRNA decay complex with RENT1, RENT2 and RENT3B. Interacts with KHSRP. Interacts with CELF1/CUGBP1. Interacts with ZC3HAV1 in an RNA-independent manner. Interacts with DHX36. Mg(2+) is required as a cofactor. Post-translationally, phosphorylation by MAPKAPK2, preventing GADD45A mRNA degradation after genotoxic stress. Ubiquitous.

The protein resides in the nucleus. The protein localises to the cytoplasm. Its subcellular location is the nucleolus. The enzyme catalyses Exonucleolytic cleavage of poly(A) to 5'-AMP.. 3'-exoribonuclease that has a preference for poly(A) tails of mRNAs, thereby efficiently degrading poly(A) tails. Exonucleolytic degradation of the poly(A) tail is often the first step in the decay of eukaryotic mRNAs and is also used to silence certain maternal mRNAs translationally during oocyte maturation and early embryonic development. Interacts with both the 3'-end poly(A) tail and the 5'-end cap structure during degradation, the interaction with the cap structure being required for an efficient degradation of poly(A) tails. Involved in nonsense-mediated mRNA decay, a critical process of selective degradation of mRNAs that contain premature stop codons. Also involved in degradation of inherently unstable mRNAs that contain AU-rich elements (AREs) in their 3'-UTR, possibly via its interaction with KHSRP. Probably mediates the removal of poly(A) tails of AREs mRNAs, which constitutes the first step of destabilization. Also able to recognize and trim poly(A) tails of microRNAs such as MIR21 and H/ACA box snoRNAs (small nucleolar RNAs) leading to microRNAs degradation or snoRNA increased stability. This is Poly(A)-specific ribonuclease PARN (PARN) from Homo sapiens (Human).